A 630-amino-acid polypeptide reads, in one-letter code: tRNA uridine 5-carboxymethylaminomethyl modification enzyme MnmG (630 aa).

13–18 (GGGHAG) is a binding site for FAD. Residue 273–287 (GPRYCPSIEDKIHRF) coordinates NAD(+).

Belongs to the MnmG family. In terms of assembly, homodimer. Heterotetramer of two MnmE and two MnmG subunits. Requires FAD as cofactor.

The protein resides in the cytoplasm. Its function is as follows. NAD-binding protein involved in the addition of a carboxymethylaminomethyl (cmnm) group at the wobble position (U34) of certain tRNAs, forming tRNA-cmnm(5)s(2)U34. This Pseudomonas putida (strain GB-1) protein is tRNA uridine 5-carboxymethylaminomethyl modification enzyme MnmG.